Here is a 200-residue protein sequence, read N- to C-terminus: Putative TLC domain-containing protein L438 (200 aa).

Residues 1 to 193 (MDYKQSNLFL…ILKILRAKLF (193 aa)) form the TLC domain. The next 6 membrane-spanning stretches (helical) occupy residues 9-29 (FLFP…CGTF), 43-63 (THGI…LMIV), 74-94 (VHHF…YYLI), 96-116 (YLFA…AIKY), 131-151 (LAFF…LWFV), and 165-185 (YLIV…YRIL).

It localises to the membrane. This chain is Putative TLC domain-containing protein L438, found in Acanthamoeba polyphaga mimivirus (APMV).